A 263-amino-acid polypeptide reads, in one-letter code: Zinc finger protein STAMENLESS 1 (263 aa).

Positions M1 to K51 are disordered. Residues T25–S40 are compositionally biased toward low complexity. The segment at Y58–H80 adopts a C2H2-type zinc-finger fold.

Expressed in leaf primordia, inflorescence meristem, rachis branch meristems, floral meristem and floral organ primordia.

The protein resides in the nucleus. Functionally, regulates floral organ identity and cell proliferation in the inner floral whorls. Probably specifies the identities of lodicule and stamen through positive regulation of MADS16 expression. May contribute to morphogenesis by suppressing OSH1 expression in the lateral organs. The protein is Zinc finger protein STAMENLESS 1 (SL1) of Oryza sativa subsp. japonica (Rice).